The primary structure comprises 612 residues: Probable serine/threonine-protein kinase WNK4 (612 aa).

Positions 25–282 constitute a Protein kinase domain; sequence IRYNEVLGRG…AKELLQDPFL (258 aa). ATP is bound by residues 105-108 and Lys155; that span reads TELF. Residue Asp172 is the Proton acceptor of the active site.

The protein belongs to the protein kinase superfamily. Ser/Thr protein kinase family. WNK subfamily.

The catalysed reaction is L-seryl-[protein] + ATP = O-phospho-L-seryl-[protein] + ADP + H(+). The enzyme catalyses L-threonyl-[protein] + ATP = O-phospho-L-threonyl-[protein] + ADP + H(+). This Oryza sativa subsp. japonica (Rice) protein is Probable serine/threonine-protein kinase WNK4 (WNK4).